The following is a 609-amino-acid chain: Dihydroxy-acid dehydratase (609 aa).

Residue Asp-81 coordinates Mg(2+). Cys-122 contacts [2Fe-2S] cluster. Mg(2+) contacts are provided by Asp-123 and Lys-124. N6-carboxylysine is present on Lys-124. Cys-195 provides a ligand contact to [2Fe-2S] cluster. Residue Glu-491 participates in Mg(2+) binding. The active-site Proton acceptor is Ser-517.

Belongs to the IlvD/Edd family. Homodimer. [2Fe-2S] cluster serves as cofactor. Requires Mg(2+) as cofactor.

The catalysed reaction is (2R)-2,3-dihydroxy-3-methylbutanoate = 3-methyl-2-oxobutanoate + H2O. It catalyses the reaction (2R,3R)-2,3-dihydroxy-3-methylpentanoate = (S)-3-methyl-2-oxopentanoate + H2O. The protein operates within amino-acid biosynthesis; L-isoleucine biosynthesis; L-isoleucine from 2-oxobutanoate: step 3/4. It participates in amino-acid biosynthesis; L-valine biosynthesis; L-valine from pyruvate: step 3/4. Its function is as follows. Functions in the biosynthesis of branched-chain amino acids. Catalyzes the dehydration of (2R,3R)-2,3-dihydroxy-3-methylpentanoate (2,3-dihydroxy-3-methylvalerate) into 2-oxo-3-methylpentanoate (2-oxo-3-methylvalerate) and of (2R)-2,3-dihydroxy-3-methylbutanoate (2,3-dihydroxyisovalerate) into 2-oxo-3-methylbutanoate (2-oxoisovalerate), the penultimate precursor to L-isoleucine and L-valine, respectively. The protein is Dihydroxy-acid dehydratase of Acinetobacter baumannii (strain AB0057).